A 348-amino-acid chain; its full sequence is MSAISNNPDKEKALNLVLNQIERNFGKGAIMRLGDAAQMKVATIPSGALTLDQAMGGGFPRGRIVEIYGPESSGKTTVALHAIAEVQKAGGVAAFIDAEHALDPTYSAALGVDIENLLVAQPDNGESALEIADQLVRSAAVDLIVIDSVAALVPRAEIEGEMGDVQVGLQARLMSKALRKIAGNMGRSGCTVIFLNQLRQKIGISYGNPEVTTGGTALKFYASVRLDIRRIQTLKKGSEGEFGIRAKVKVAKNKVAPPFRIAEFDIIFGKGISRVGCMLDLAEQTGVITRKGAWYSYEGDNIAQGRDNAVKYLEENPDVAAIVTQKVRENLDMSSMGFGDEHHTTEEE.

69–76 provides a ligand contact to ATP; it reads GPESSGKT.

This sequence belongs to the RecA family.

Its subcellular location is the cytoplasm. Its function is as follows. Can catalyze the hydrolysis of ATP in the presence of single-stranded DNA, the ATP-dependent uptake of single-stranded DNA by duplex DNA, and the ATP-dependent hybridization of homologous single-stranded DNAs. It interacts with LexA causing its activation and leading to its autocatalytic cleavage. The chain is Protein RecA from Picosynechococcus sp. (strain ATCC 27264 / PCC 7002 / PR-6) (Agmenellum quadruplicatum).